The chain runs to 167 residues: MSEWMKKGPLEWQDYIYKEVRVTASEKNEYKGWVLTTDPVSANIVLVNFLEDGSMSVTGIMGHAVQTVETMNEGDHRVREKLMHLFTSGDCKAYSPEDLEERKNSLKKWLEKNHIPITEQGDAPRTLCVAGVLTIDPPYGPENCSSSNEIILSRVQDLIEGHLTASQ.

A Sm domain is found at K7–G74. Positions E69–Q167 constitute an AD domain. Residues S95 and S166 each carry the phosphoserine modification.

As to quaternary structure, part of the core SMN complex that contains SMN1, GEMIN2/SIP1, DDX20/GEMIN3, GEMIN4, GEMIN5, GEMIN6, GEMIN7, GEMIN8 and STRAP/UNRIP. Part of the SMN-Sm complex that contains SMN1, GEMIN2/SIP1, DDX20/GEMIN3, GEMIN4, GEMIN5, GEMIN6, GEMIN7, GEMIN8, STRAP/UNRIP and the Sm proteins SNRPB, SNRPD1, SNRPD2, SNRPD3, SNRPE, SNRPF and SNRPG. Interacts with GEMIN7; the interaction is direct. Interacts with GEMIN8; the interaction is direct. Interacts with SNRPB, SNRPD2, SNRPD3 and SNRPE; the interaction is direct.

The protein localises to the nucleus. Its subcellular location is the nucleoplasm. It is found in the gem. The protein resides in the cytoplasm. The SMN complex catalyzes the assembly of small nuclear ribonucleoproteins (snRNPs), the building blocks of the spliceosome, and thereby plays an important role in the splicing of cellular pre-mRNAs. Most spliceosomal snRNPs contain a common set of Sm proteins SNRPB, SNRPD1, SNRPD2, SNRPD3, SNRPE, SNRPF and SNRPG that assemble in a heptameric protein ring on the Sm site of the small nuclear RNA to form the core snRNP (Sm core). In the cytosol, the Sm proteins SNRPD1, SNRPD2, SNRPE, SNRPF and SNRPG are trapped in an inactive 6S pICln-Sm complex by the chaperone CLNS1A that controls the assembly of the core snRNP. To assemble core snRNPs, the SMN complex accepts the trapped 5Sm proteins from CLNS1A forming an intermediate. Binding of snRNA inside 5Sm triggers eviction of the SMN complex, thereby allowing binding of SNRPD3 and SNRPB to complete assembly of the core snRNP. This Homo sapiens (Human) protein is Gem-associated protein 6 (GEMIN6).